Reading from the N-terminus, the 348-residue chain is Thioredoxin-related protein DsbJ (348 aa).

The signal sequence occupies residues 1–32 (MILLQNIKRCSLKQLKVLATLLLSLSLPTLEA).

It is found in the periplasm. This is Thioredoxin-related protein DsbJ (dsbJ) from Chlamydia pneumoniae (Chlamydophila pneumoniae).